The following is a 658-amino-acid chain: Probable mitochondrial Rho GTPase gemA (658 aa).

At 1 to 633 (MKNNIKVILI…NGSNGSNNSN (633 aa)) the chain is on the cytoplasmic side. Residues 2–175 (KNNIKVILIG…LYASQTSVFF (174 aa)) form the Miro 1 domain. Residues 11 to 18 (GDEQVGKS), 57 to 62 (DTFDDG), and 118 to 121 (NKLD) contribute to the GTP site. EF-hand domains follow at residues 191–226 (GCER…CGHE) and 311–346 (MGNE…TPKI). 9 residues coordinate Ca(2+): Asp204, Asp206, Asp208, Ser210, Glu215, Asp324, Asp326, Asp328, and Asp335. The Miro 2 domain maps to 420-616 (RNIVNCYVFG…YHEMMETIVN (197 aa)). GTP is bound by residues 429–436 (GAEAVGKT), 466–468 (LLK), and 530–533 (TKNN). The interval 532–575 (NNNNNNNNNNNNNNNNNNNNLNNNNNNINNNNNNNNNNTTTTNA) is disordered. Residues 634-656 (ILTYLVIAAGVAGVGLLLSKYLA) traverse the membrane as a helical; Anchor for type IV membrane protein segment. Residues 657–658 (KK) are Mitochondrial intermembrane-facing.

This sequence belongs to the mitochondrial Rho GTPase family.

The protein resides in the mitochondrion outer membrane. Its function is as follows. Mitochondrial GTPase involved in mitochondrial trafficking. Probably involved in control of anterograde transport of mitochondria and their subcellular distribution. In Dictyostelium discoideum (Social amoeba), this protein is Probable mitochondrial Rho GTPase gemA (gemA).